A 98-amino-acid chain; its full sequence is Small ribosomal subunit protein uS19 (98 aa).

2 disordered regions span residues 1 to 30 (MARS…KKSV) and 78 to 98 (RTFH…PAKK). Positions 9 to 24 (PFADKHLTKKVEDANK) are enriched in basic and acidic residues.

Belongs to the universal ribosomal protein uS19 family.

Functionally, protein S19 forms a complex with S13 that binds strongly to the 16S ribosomal RNA. The protein is Small ribosomal subunit protein uS19 of Anaeromyxobacter dehalogenans (strain 2CP-1 / ATCC BAA-258).